A 125-amino-acid polypeptide reads, in one-letter code: Transmembrane protein 14EP (125 aa).

The next 2 helical transmembrane spans lie at 9–29 and 81–101; these read VPLY…GISG and ILTL…LIVS.

The protein belongs to the TMEM14 family.

It is found in the membrane. This Homo sapiens (Human) protein is Transmembrane protein 14EP (TMEM14EP).